The sequence spans 849 residues: Putative pentatricopeptide repeat-containing protein At5g08490 (849 aa).

PPR repeat units follow at residues 20 to 54 (DHRV…GHIA), 55 to 89 (CSEV…DPVV), 121 to 155 (SSVT…GLEK), 156 to 187 (DTLV…IADK), 188 to 222 (DVVS…PTEP), 223 to 260 (NYAT…SWLQ), 262 to 296 (HVFV…DLVS), 297 to 327 (WNVV…GDVS), 329 to 363 (DSVT…SYLL), 365 to 399 (DTSV…DIIS), 400 to 430 (WNAI…AITL), 431 to 465 (DSVT…GLLH), 469 to 499 (EPKL…LSER), 501 to 531 (TLVS…MSTT), 532 to 566 (DLTT…GMRP), 567 to 597 (NTVT…IIRG), 601 to 631 (DIRL…DARR), 632 to 666 (DLVM…NIKP), 667 to 702 (DHVF…GMKP), and 703 to 733 (TMEQ…MPVE). A type E motif region spans residues 738–813 (IWGTLLRACT…PAGCSWLEVD (76 aa)). The segment at 814–844 (GQRNVFVSGDCSHPRRDSIFDLVNALYLQMK) is type E(+) motif.

It belongs to the PPR family. PCMP-E subfamily.

The polypeptide is Putative pentatricopeptide repeat-containing protein At5g08490 (PCMP-E32) (Arabidopsis thaliana (Mouse-ear cress)).